A 276-amino-acid polypeptide reads, in one-letter code: Large ribosomal subunit protein uL2 (276 aa).

Residues 223-276 form a disordered region; the sequence is VVMNPVDHPHGGGEGKSSGGRHPVSPWGKKTRGPKTRNNKVTDRLIIRRRNAKR. The span at 251-260 shows a compositional bias: basic residues; it reads KKTRGPKTRN.

This sequence belongs to the universal ribosomal protein uL2 family. As to quaternary structure, part of the 50S ribosomal subunit. Forms a bridge to the 30S subunit in the 70S ribosome.

Its function is as follows. One of the primary rRNA binding proteins. Required for association of the 30S and 50S subunits to form the 70S ribosome, for tRNA binding and peptide bond formation. It has been suggested to have peptidyltransferase activity; this is somewhat controversial. Makes several contacts with the 16S rRNA in the 70S ribosome. The protein is Large ribosomal subunit protein uL2 of Hyphomonas neptunium (strain ATCC 15444).